The chain runs to 322 residues: MLRIANEERPWVEILPTQGATIGELTLSMQQYPVQQGTLFTINYHNELGRVWIAEQCWQRWCEGLIGTANRSAIDPELLYGIAEWGLAPLLQASDATLCQNEPPTSCSNLPHQLALHIKWTVEEHEFHSIIFTWPTGFLRNIVGELSAERQQIYPAPPVVVPVYSGWCQLTLIELESIEIGMGVRIHCFGDIRLGFFAIQLPGGIYARVLLTEDNTMKFDELVQDIETLLASGSPMSKSDGTSSVELEQIPQQVLFEVGRASLEIGQLRQLKTGDVLPVGGCFAPEVTIRVNDRIIGQGELIACGNEFMVRITRWYLCKNTA.

The protein belongs to the FliN/MopA/SpaO family.

Its function is as follows. Part of a type III secretion system. The polypeptide is Secretion system apparatus protein SsaQ (ssaQ) (Salmonella typhimurium (strain LT2 / SGSC1412 / ATCC 700720)).